The following is a 163-amino-acid chain: Photosystem II extrinsic protein V (163 aa).

Positions 1–26 (MFKKSYQFFALVLFSIFNVLVTSASA) are cleaved as a signal peptide. Heme c contacts are provided by cysteine 63, cysteine 66, histidine 67, and histidine 118.

This sequence belongs to the cytochrome c family. PsbV subfamily. In terms of assembly, PSII is composed of 1 copy each of membrane proteins PsbA, PsbB, PsbC, PsbD, PsbE, PsbF, PsbH, PsbI, PsbJ, PsbK, PsbL, PsbM, PsbT, PsbY, PsbZ, Psb30/Ycf12, at least 3 peripheral proteins of the oxygen-evolving complex and a large number of cofactors. It forms dimeric complexes. Heme c serves as cofactor.

The protein localises to the plastid. Its subcellular location is the chloroplast thylakoid membrane. Functionally, one of the extrinsic, lumenal subunits of photosystem II (PSII). PSII is a light-driven water plastoquinone oxidoreductase, using light energy to abstract electrons from H(2)O, generating a proton gradient subsequently used for ATP formation. The extrinsic proteins stabilize the structure of photosystem II oxygen-evolving complex (OEC), the ion environment of oxygen evolution and protect the OEC against heat-induced inactivation. This Trieres chinensis (Marine centric diatom) protein is Photosystem II extrinsic protein V.